The chain runs to 739 residues: Vascular cell adhesion protein 1 (739 aa).

The first 24 residues, 1–24 (MPGKMVVILGASNILWIMFAASQA), serve as a signal peptide directing secretion. 7 consecutive Ig-like C2-type domains span residues 25-105 (FKIE…RKLE), 109-212 (QVEI…TVRQ), 223-309 (PKNT…LIVQ), 312-399 (PFTV…IQVE), 408-506 (EIEM…QTLY), 511-595 (PRDT…VELI), and 600-684 (PKDI…LTLD). Residues 25 to 698 (FKIETTPESR…ENNKDYFSPE (674 aa)) lie on the Extracellular side of the membrane. Disulfide bonds link Cys-47/Cys-95, Cys-52/Cys-99, Cys-137/Cys-195, Cys-246/Cys-291, and Cys-335/Cys-383. N-linked (GlcNAc...) asparagine glycosylation is found at Asn-273, Asn-365, Asn-417, Asn-463, Asn-531, and Asn-561. Cysteines 534 and 579 form a disulfide. Residues 699–720 (LLVLYFASSLIIPAIGMIIYFA) form a helical membrane-spanning segment. The Cytoplasmic segment spans residues 721-739 (RKANMKGSYSLVEAQKSKV).

Cleaved by the metalloproteinase ADAM17 to generate the soluble form. Post-translationally, sialoglycoprotein. In terms of processing, ubiquitinated by TRIM65 via 'Lys-48'-linked ubiquitination; leading to proteasomal degradation. Expressed on inflamed vascular endothelium, as well as on macrophage-like and dendritic cell types in both normal and inflamed tissue.

It is found in the cell membrane. The protein resides in the secreted. Functionally, cell adhesion glycoprotein predominantly expressed on the surface of endothelial cells that plays an important role in immune surveillance and inflammation. Acts as a major regulator of leukocyte adhesion to the endothelium through interaction with different types of integrins. During inflammatory responses, binds ligands on the surface of activated endothelial cells to initiate the activation of calcium channels and the plasma membrane-associated small GTPase RAC1 leading to leukocyte transendothelial migration. Also serves as a quality-control checkpoint for entry into bone marrow by providing a 'don't-eat-me' stamping in the context of major histocompatibility complex (MHC) class-I presentation. This chain is Vascular cell adhesion protein 1 (VCAM1), found in Homo sapiens (Human).